The following is a 392-amino-acid chain: Integrin-linked kinase-associated serine/threonine phosphatase 2C (392 aa).

The residue at position 1 (methionine 1) is an N-acetylmethionine. Residues 1–90 are disordered; it reads MDLFGDLPEP…TSEEEKNGSE (90 aa). Serine 13 carries the phosphoserine modification. The segment covering 56–70 has biased composition (polar residues); the sequence is SGDSGSLATSISQMV. Over residues 72–90 the composition is skewed to basic and acidic residues; that stretch reads TEGKGAKRKTSEEEKNGSE. Positions 108–390 constitute a PPM-type phosphatase domain; that stretch reads KGYVAERKGE…DNVTVMVVRI (283 aa). Residues aspartate 152 and glycine 153 each contribute to the Mn(2+) site. Lysine 210 carries the post-translational modification N6-acetyllysine. Aspartate 326 and aspartate 381 together coordinate Mn(2+).

Belongs to the PP2C family. As to quaternary structure, interacts with ILK. Specific association with ILK is independent of the catalytic activity of either partner. Mg(2+) is required as a cofactor. Requires Mn(2+) as cofactor. As to expression, widely expressed. Highest levels expressed in striated muscle. Much lower levels evident in various smooth muscle tissues.

The protein resides in the cytoplasm. It catalyses the reaction O-phospho-L-seryl-[protein] + H2O = L-seryl-[protein] + phosphate. The enzyme catalyses O-phospho-L-threonyl-[protein] + H2O = L-threonyl-[protein] + phosphate. With respect to regulation, inhibited rather than stimulated by magnesium. Protein phosphatase that may play a role in regulation of cell cycle progression via dephosphorylation of its substrates whose appropriate phosphorylation states might be crucial for cell proliferation. Selectively associates with integrin linked kinase (ILK), to modulate cell adhesion and growth factor signaling. Inhibits the ILK-GSK3B signaling axis and may play an important role in inhibiting oncogenic transformation. The chain is Integrin-linked kinase-associated serine/threonine phosphatase 2C (ILKAP) from Homo sapiens (Human).